Here is a 482-residue protein sequence, read N- to C-terminus: Glycogen synthase (482 aa).

Lys21 contacts ADP-alpha-D-glucose.

This sequence belongs to the glycosyltransferase 1 family. Bacterial/plant glycogen synthase subfamily.

The enzyme catalyses [(1-&gt;4)-alpha-D-glucosyl](n) + ADP-alpha-D-glucose = [(1-&gt;4)-alpha-D-glucosyl](n+1) + ADP + H(+). It functions in the pathway glycan biosynthesis; glycogen biosynthesis. In terms of biological role, synthesizes alpha-1,4-glucan chains using ADP-glucose. The sequence is that of Glycogen synthase from Clostridium perfringens (strain 13 / Type A).